The primary structure comprises 1106 residues: Carbamoyl phosphate synthase large chain (1106 aa).

Positions 1 to 402 (MPRREDIRSV…SFQKALRSLE (402 aa)) are carboxyphosphate synthetic domain. Residues Arg129, Arg169, Gly175, Gly176, Glu208, Val210, Glu215, Gly241, Val242, His243, Gln285, and Glu299 each coordinate ATP. Residues 133-328 (KKAMEKIGVR…IAKIAALLSI (196 aa)) enclose the ATP-grasp 1 domain. Residues Gln285, Glu299, and Asn301 each coordinate Mg(2+). Gln285, Glu299, and Asn301 together coordinate Mn(2+). Residues 403-582 (IDRYGFGSDG…YSSYDEEDES (180 aa)) are oligomerization domain. The interval 583-964 (DVTNAKSVMI…AFLKSQYMAG (382 aa)) is carbamoyl phosphate synthetic domain. Residues 707–898 (VEVLEKLKLN…IVKYATRIMM (192 aa)) enclose the ATP-grasp 2 domain. Residues Arg743, Ser782, Leu784, Glu789, Gly814, Ile815, His816, Ser817, Gln857, and Glu869 each contribute to the ATP site. Residues Gln857, Glu869, and Asn871 each coordinate Mg(2+). Mn(2+) is bound by residues Gln857, Glu869, and Asn871. The MGS-like domain occupies 965–1106 (DELPSQGTVF…QEIHAMPKIL (142 aa)). The allosteric domain stretch occupies residues 965–1106 (DELPSQGTVF…QEIHAMPKIL (142 aa)).

This sequence belongs to the CarB family. Composed of two chains; the small (or glutamine) chain promotes the hydrolysis of glutamine to ammonia, which is used by the large (or ammonia) chain to synthesize carbamoyl phosphate. Tetramer of heterodimers (alpha,beta)4. Mg(2+) is required as a cofactor. The cofactor is Mn(2+).

It carries out the reaction hydrogencarbonate + L-glutamine + 2 ATP + H2O = carbamoyl phosphate + L-glutamate + 2 ADP + phosphate + 2 H(+). It catalyses the reaction hydrogencarbonate + NH4(+) + 2 ATP = carbamoyl phosphate + 2 ADP + phosphate + 2 H(+). Its pathway is amino-acid biosynthesis; L-arginine biosynthesis; carbamoyl phosphate from bicarbonate: step 1/1. It functions in the pathway pyrimidine metabolism; UMP biosynthesis via de novo pathway; (S)-dihydroorotate from bicarbonate: step 1/3. Functionally, large subunit of the glutamine-dependent carbamoyl phosphate synthetase (CPSase). CPSase catalyzes the formation of carbamoyl phosphate from the ammonia moiety of glutamine, carbonate, and phosphate donated by ATP, constituting the first step of 2 biosynthetic pathways, one leading to arginine and/or urea and the other to pyrimidine nucleotides. The large subunit (synthetase) binds the substrates ammonia (free or transferred from glutamine from the small subunit), hydrogencarbonate and ATP and carries out an ATP-coupled ligase reaction, activating hydrogencarbonate by forming carboxy phosphate which reacts with ammonia to form carbamoyl phosphate. This chain is Carbamoyl phosphate synthase large chain, found in Leptospira interrogans serogroup Icterohaemorrhagiae serovar copenhageni (strain Fiocruz L1-130).